We begin with the raw amino-acid sequence, 360 residues long: GDSL esterase/lipase At1g06990 (360 aa).

An N-terminal signal peptide occupies residues 1–22 (MLIHVIIFMIITTMQFSTTCHA). Asn-26 and Asn-31 each carry an N-linked (GlcNAc...) asparagine glycan. Residue Ser-44 is the Nucleophile of the active site. N-linked (GlcNAc...) asparagine glycosylation is found at Asn-73, Asn-126, and Asn-272. Residues Asp-335 and His-338 contribute to the active site.

It belongs to the 'GDSL' lipolytic enzyme family.

The protein localises to the secreted. The polypeptide is GDSL esterase/lipase At1g06990 (Arabidopsis thaliana (Mouse-ear cress)).